The primary structure comprises 297 residues: Phospholipid scramblase 2 (297 aa).

The segment at 1–72 (MRSWNSLFCL…NQPGRPEGVP (72 aa)) is proline-rich domain (PRD). Topologically, residues 1–276 (MRSWNSLFCL…IQFPRDLDVK (276 aa)) are cytoplasmic. T149 bears the Phosphothreonine; by PKC mark. 5 S-palmitoyl cysteine lipidation sites follow: C172, C173, C174, C176, and C177. Residues 277-293 (MKAVMIGACFLIDYMFF) form a helical membrane-spanning segment. Topologically, residues 294–297 (ERTR) are extracellular.

It belongs to the phospholipid scramblase family. Requires Ca(2+) as cofactor. In terms of tissue distribution, expression of isoform 1 seems restricted to testis.

It localises to the membrane. The protein localises to the nucleus. The catalysed reaction is a 1,2-diacyl-sn-glycero-3-phosphocholine(in) = a 1,2-diacyl-sn-glycero-3-phosphocholine(out). Functionally, may catalyze calcium-induced ATP-independent rapid bidirectional and non-specific movement of phospholipids (lipid scrambling or lipid flip-flop) between the inner and outer leaflet of the plasma membrane. Has no phospholipid scramblase activity, due to the lack of a N-terminal proline-rich domain. This Homo sapiens (Human) protein is Phospholipid scramblase 2.